Consider the following 176-residue polypeptide: Lipoprotein signal peptidase (176 aa).

A run of 4 helical transmembrane segments spans residues 10 to 30, 48 to 68, 78 to 98, and 102 to 122; these read LFQF…AIVL, VPVL…AFSF, YFFT…LLRM, and MVVL…NLID. Catalysis depends on residues Asp-131 and Asp-149. Residues 141–161 form a helical membrane-spanning segment; sequence HFPAFNIADSAITLGTILLLI.

Belongs to the peptidase A8 family.

The protein resides in the cell inner membrane. It carries out the reaction Release of signal peptides from bacterial membrane prolipoproteins. Hydrolyzes -Xaa-Yaa-Zaa-|-(S,diacylglyceryl)Cys-, in which Xaa is hydrophobic (preferably Leu), and Yaa (Ala or Ser) and Zaa (Gly or Ala) have small, neutral side chains.. Its pathway is protein modification; lipoprotein biosynthesis (signal peptide cleavage). Functionally, this protein specifically catalyzes the removal of signal peptides from prolipoproteins. This is Lipoprotein signal peptidase from Acinetobacter baumannii (strain SDF).